Here is a 494-residue protein sequence, read N- to C-terminus: Cytochrome P450 2C44 (494 aa).

The N-terminal stretch at 1-25 is a signal peptide; the sequence is MELLGLPTLALLVLVMSLSLLSVWT. Position 131 is a phosphoserine (Ser131). An N6-acetyllysine mark is found at Lys253 and Lys379. Cys439 is a heme binding site.

This sequence belongs to the cytochrome P450 family. Heme serves as cofactor. As to expression, highly expressed in liver, particularly in hepatocytes and bile duct epithelial cells (at protein level). Expressed in nephron segments. Prominent expression is detected in proximal tubules at the corticomedullary junction (at protein level). Also expressed in renal cortical collecting duct. Lower expression levels are detected in adrenal glands.

The protein resides in the endoplasmic reticulum membrane. Its subcellular location is the microsome membrane. The catalysed reaction is (5Z,8Z,11Z,14Z)-eicosatetraenoate + reduced [NADPH--hemoprotein reductase] + O2 = (8R,9S)-epoxy-(5Z,11Z,14Z)-eicosatrienoate + oxidized [NADPH--hemoprotein reductase] + H2O + H(+). It catalyses the reaction (5Z,8Z,11Z,14Z)-eicosatetraenoate + reduced [NADPH--hemoprotein reductase] + O2 = (11R,12S)-epoxy-(5Z,8Z,14Z)-eicosatrienoate + oxidized [NADPH--hemoprotein reductase] + H2O + H(+). The enzyme catalyses (5Z,8Z,11Z,14Z)-eicosatetraenoate + reduced [NADPH--hemoprotein reductase] + O2 = 14,15-epoxy-(5Z,8Z,11Z)-eicosatrienoate + oxidized [NADPH--hemoprotein reductase] + H2O + H(+). It carries out the reaction (5Z,8Z,11Z,14Z,17Z)-eicosapentaenoate + reduced [NADPH--hemoprotein reductase] + O2 = 8,9-epoxy-(5Z,11Z,14Z,17Z)-eicosatetraenoate + oxidized [NADPH--hemoprotein reductase] + H2O + H(+). The catalysed reaction is (5Z,8Z,11Z,14Z,17Z)-eicosapentaenoate + reduced [NADPH--hemoprotein reductase] + O2 = 11,12-epoxy-(5Z,8Z,14Z,17Z)-eicosatetraenoate + oxidized [NADPH--hemoprotein reductase] + H2O + H(+). It catalyses the reaction (5Z,8Z,11Z,14Z,17Z)-eicosapentaenoate + reduced [NADPH--hemoprotein reductase] + O2 = 14,15-epoxy-(5Z,8Z,11Z,17Z)-eicosatetraenoate + oxidized [NADPH--hemoprotein reductase] + H2O + H(+). The enzyme catalyses (5Z,8Z,11Z,14Z,17Z)-eicosapentaenoate + reduced [NADPH--hemoprotein reductase] + O2 = (17R,18S)-epoxy-(5Z,8Z,11Z,14Z)-eicosatetraenoate + oxidized [NADPH--hemoprotein reductase] + H2O + H(+). It carries out the reaction (5Z,8Z,11Z,14Z,17Z)-eicosapentaenoate + reduced [NADPH--hemoprotein reductase] + O2 = (17S,18R)-epoxy-(5Z,8Z,11Z,14Z)-eicosatetraenoate + oxidized [NADPH--hemoprotein reductase] + H2O + H(+). The catalysed reaction is 20-hydroxy-(5Z,8Z,11Z,14Z)-eicosatetraenoate + reduced [NADPH--hemoprotein reductase] + O2 = 20-hydroxy-8,9-epoxy-(5Z,11Z,14Z)-eicosatrienoate + oxidized [NADPH--hemoprotein reductase] + H2O + H(+). Its pathway is lipid metabolism; arachidonate metabolism. Functionally, a cytochrome P450 monooxygenase involved in polyunsaturated fatty acids (PUFAs) metabolism and signaling. Catalyzes preferentially the epoxidation of double bonds of PUFAs. Converts arachidonic acid (ARA, C20:4(n-6)) primarily to stereospecific products 8R,9S-epoxyeicosatrienoate (EET) and 11R,12S-EET. Plays a major role in the formation of EETs and hydroxy-EETs (HEETs) in kidney. Via EETs may inhibit the epithelial sodium channels (ENaCs) in nephron segments, preventing excessive sodium absorption during high dietary salt intake. Participates in the formation of anti-inflammatory hydroxyepoxyeicosatrienoic acids (HEETs) by converting 20-hydroxyeicosatetraenoic acid (20-HETE) to 20,8,9-HEET, an activator of PPARA. Metabolizes eicosapentaenoic acid (EPA, C20:5(n-3)) to epoxyeicosatetraenoic acid (EETeTr) regioisomers, 8,9-, 11,12-, 14,15-, and 17,18- EETeTr, preferentially producing 17R,18S enantiomer. Mechanistically, uses molecular oxygen inserting one oxygen atom into a substrate, and reducing the second into a water molecule, with two electrons provided by NADPH via cytochrome P450 reductase (CPR; NADPH-ferrihemoprotein reductase). This Mus musculus (Mouse) protein is Cytochrome P450 2C44.